The chain runs to 1244 residues: ATP-dependent helicase/nuclease subunit A (1244 aa).

Residues 4 to 475 (KKWTAEQLAA…IGLSKNFRSR (472 aa)) form the UvrD-like helicase ATP-binding domain. 25 to 32 (AAAGAGKT) contacts ATP. Positions 515-816 (EDVKTATGPV…RIMSIHKSKG (302 aa)) constitute a UvrD-like helicase C-terminal domain. The disordered stretch occupies residues 538 to 559 (EQNTDSAEEKLTDGEEQEDLDS).

It belongs to the helicase family. AddA subfamily. Heterodimer of AddA and AddB/RexB. The cofactor is Mg(2+).

The enzyme catalyses Couples ATP hydrolysis with the unwinding of duplex DNA by translocating in the 3'-5' direction.. It catalyses the reaction ATP + H2O = ADP + phosphate + H(+). In terms of biological role, the heterodimer acts as both an ATP-dependent DNA helicase and an ATP-dependent, dual-direction single-stranded exonuclease. Recognizes the chi site generating a DNA molecule suitable for the initiation of homologous recombination. The AddA nuclease domain is required for chi fragment generation; this subunit has the helicase and 3' -&gt; 5' nuclease activities. This is ATP-dependent helicase/nuclease subunit A from Desulforamulus reducens (strain ATCC BAA-1160 / DSM 100696 / MI-1) (Desulfotomaculum reducens).